A 443-amino-acid chain; its full sequence is Thymidine phosphorylase (443 aa).

It belongs to the thymidine/pyrimidine-nucleoside phosphorylase family. Homodimer.

The enzyme catalyses thymidine + phosphate = 2-deoxy-alpha-D-ribose 1-phosphate + thymine. It functions in the pathway pyrimidine metabolism; dTMP biosynthesis via salvage pathway; dTMP from thymine: step 1/2. Functionally, the enzymes which catalyze the reversible phosphorolysis of pyrimidine nucleosides are involved in the degradation of these compounds and in their utilization as carbon and energy sources, or in the rescue of pyrimidine bases for nucleotide synthesis. The protein is Thymidine phosphorylase of Shewanella loihica (strain ATCC BAA-1088 / PV-4).